Reading from the N-terminus, the 378-residue chain is Queuine tRNA-ribosyltransferase (378 aa).

The active-site Proton acceptor is the D89. Residues 89–93, D143, Q187, and G214 contribute to the substrate site; that span reads DSGGF. The tract at residues 245 to 251 is RNA binding; sequence GVGKPED. The active-site Nucleophile is the D264. The tract at residues 269 to 273 is RNA binding; important for wobble base 34 recognition; it reads TRNAR. Zn(2+) is bound by residues C302, C304, C307, and H333.

The protein belongs to the queuine tRNA-ribosyltransferase family. Homodimer. Within each dimer, one monomer is responsible for RNA recognition and catalysis, while the other monomer binds to the replacement base PreQ1. It depends on Zn(2+) as a cofactor.

It carries out the reaction 7-aminomethyl-7-carbaguanine + guanosine(34) in tRNA = 7-aminomethyl-7-carbaguanosine(34) in tRNA + guanine. The protein operates within tRNA modification; tRNA-queuosine biosynthesis. Functionally, catalyzes the base-exchange of a guanine (G) residue with the queuine precursor 7-aminomethyl-7-deazaguanine (PreQ1) at position 34 (anticodon wobble position) in tRNAs with GU(N) anticodons (tRNA-Asp, -Asn, -His and -Tyr). Catalysis occurs through a double-displacement mechanism. The nucleophile active site attacks the C1' of nucleotide 34 to detach the guanine base from the RNA, forming a covalent enzyme-RNA intermediate. The proton acceptor active site deprotonates the incoming PreQ1, allowing a nucleophilic attack on the C1' of the ribose to form the product. After dissociation, two additional enzymatic reactions on the tRNA convert PreQ1 to queuine (Q), resulting in the hypermodified nucleoside queuosine (7-(((4,5-cis-dihydroxy-2-cyclopenten-1-yl)amino)methyl)-7-deazaguanosine). This Yersinia enterocolitica serotype O:8 / biotype 1B (strain NCTC 13174 / 8081) protein is Queuine tRNA-ribosyltransferase.